We begin with the raw amino-acid sequence, 544 residues long: Putative lipase ATG15 (544 aa).

At 1–45 the chain is on the cytoplasmic side; it reads MVADFDSGWYEGAGDELGQGARNGVLRERLGGNEKAQVVRSRRKA. Residues 46–66 traverse the membrane as a helical; Signal-anchor for type II membrane protein segment; it reads VAWNVLMVLGLILYVLYSACF. Residues 67–544 are Lumenal-facing; sequence AQARQWWRTN…NWFGYCTEYA (478 aa). N-linked (GlcNAc...) asparagine glycosylation is found at Asn-200, Asn-229, and Asn-234. Ser-362 functions as the Charge relay system in the catalytic mechanism. The interval 508–530 is disordered; it reads PMPSSVASKPTPTPTSPGSPSST.

Belongs to the AB hydrolase superfamily. Lipase family. In terms of assembly, binds to both phosphatidylinositol (PI) and phosphatidylinositol 3,5-bisphosphate (PIP2).

The protein localises to the endosome. It is found in the multivesicular body membrane. It localises to the prevacuolar compartment membrane. The enzyme catalyses a triacylglycerol + H2O = a diacylglycerol + a fatty acid + H(+). Lipase which is essential for lysis of subvacuolar cytoplasm to vacuole targeted bodies and intravacuolar autophagic bodies. Involved in the lysis of intravacuolar multivesicular body (MVB) vesicles. The intravacuolar membrane disintegration by ATG15 is critical to life span extension. In Eremothecium gossypii (strain ATCC 10895 / CBS 109.51 / FGSC 9923 / NRRL Y-1056) (Yeast), this protein is Putative lipase ATG15 (ATG15).